Reading from the N-terminus, the 443-residue chain is UDP-N-acetylmuramate--L-alanine ligase (443 aa).

110–116 (GAHGKTS) provides a ligand contact to ATP.

This sequence belongs to the MurCDEF family.

The protein localises to the cytoplasm. It carries out the reaction UDP-N-acetyl-alpha-D-muramate + L-alanine + ATP = UDP-N-acetyl-alpha-D-muramoyl-L-alanine + ADP + phosphate + H(+). It participates in cell wall biogenesis; peptidoglycan biosynthesis. In terms of biological role, cell wall formation. This chain is UDP-N-acetylmuramate--L-alanine ligase, found in Streptococcus equi subsp. equi (strain 4047).